The chain runs to 338 residues: Large ribosomal subunit protein uL10 (338 aa).

The disordered stretch occupies residues 302 to 338 (IAAQPQPAEEAEEKVEEEEEEEKEEEEALAGLGALFG). Residues 310-329 (EEAEEKVEEEEEEEKEEEEA) show a composition bias toward acidic residues.

Belongs to the universal ribosomal protein uL10 family. Part of the 50S ribosomal subunit. Forms part of the ribosomal stalk which helps the ribosome interact with GTP-bound translation factors. Forms a heptameric L10(L12)2(L12)2(L12)2 complex, where L10 forms an elongated spine to which the L12 dimers bind in a sequential fashion.

Forms part of the ribosomal stalk, playing a central role in the interaction of the ribosome with GTP-bound translation factors. The chain is Large ribosomal subunit protein uL10 from Thermococcus sibiricus (strain DSM 12597 / MM 739).